The chain runs to 356 residues: Guanine nucleotide-binding protein alpha-2 subunit (356 aa).

The N-myristoyl glycine moiety is linked to residue G2. C4 carries the S-palmitoyl cysteine lipid modification. One can recognise a G-alpha domain in the interval R35–L356. A G1 motif region spans residues K38–T51. GTP contacts are provided by E46, S47, G48, K49, S50, T51, D153, L178, T184, G206, N272, K273, D275, and A329. Mg(2+) is bound at residue S50. Residues D176–T184 form a G2 motif region. T184 lines the Mg(2+) pocket. Positions Y199–R208 are G3 motif. The interval I268–D275 is G4 motif. Positions T327–V332 are G5 motif.

This sequence belongs to the G-alpha family. As to quaternary structure, g proteins are composed of 3 units; alpha, beta and gamma. The alpha chain contains the guanine nucleotide binding site. Mg(2+) serves as cofactor.

Guanine nucleotide-binding proteins (G proteins) are involved as modulators or transducers in various transmembrane signaling systems. The sequence is that of Guanine nucleotide-binding protein alpha-2 subunit (GPA2) from Mycosarcoma maydis (Corn smut fungus).